Reading from the N-terminus, the 399-residue chain is Bone morphogenetic protein 8B (399 aa).

An N-terminal signal peptide occupies residues 1 to 19; sequence MAARPGLLWLLGLALCVLG. A propeptide spanning residues 20-260 is cleaved from the precursor; sequence GGHLSHPPHV…ANQSPVRAPR (241 aa). N-linked (GlcNAc...) asparagine glycosylation is found at Asn155 and Asn340. 3 disulfides stabilise this stretch: Cys298/Cys364, Cys327/Cys396, and Cys331/Cys398.

This sequence belongs to the TGF-beta family. As to quaternary structure, homodimer; disulfide-linked. Expressed in testis. Expressed in decidual cells of the uterus and in trophoblast cells of the labyrinthine region of the placenta and in the inner root sheath of hair follicles of early postnatal skin. Expressed in the extraembryonic ectoderm in pregastrula and gastrula stage mouse embryos. Expressed in brown adipose tissue and brain.

It localises to the secreted. Its function is as follows. Induces cartilage and bone formation. May be the osteoinductive factor responsible for the phenomenon of epithelial osteogenesis. Plays a role in calcium regulation and bone homeostasis. Involved in the generation of primordial germ cells; this function involves Bmp4 in a synergistic manner though separate receptor complexes seem to be involved. Required for the initiation and maintenance of spermatogenesis. Signaling protein involved in regulation of thermogenesis and energy balance. Proposed to increase the peripheral response of brown adipose tissue (BAT) to adrenergic stimulation while acting centrally in the hypothalamus to increase sympathetic output to BAT. The sequence is that of Bone morphogenetic protein 8B (Bmp8b) from Mus musculus (Mouse).